Reading from the N-terminus, the 713-residue chain is Undecaprenyl-diphosphooligosaccharide--protein glycotransferase (713 aa).

The Cytoplasmic portion of the chain corresponds to 1-11; that stretch reads MLKKEYLKNPY. The chain crosses the membrane as a helical span at residues 12–35; that stretch reads LVLFAMIVLAYVFSVFCRFYWVWW. Topologically, residues 36–96 are periplasmic; the sequence is ASEFNEYFFN…YWLYKITPFS (61 aa). The DXD motif 1 motif lies at 52 to 54; the sequence is SND. Asp54 contributes to the Mn(2+) binding site. A helical transmembrane segment spans residues 97-122; sequence FESIILYMSTFLSSLVVIPIILLANE. Over 123 to 125 the chain is Cytoplasmic; sequence YKR. A helical transmembrane segment spans residues 126–144; sequence PLMGFVAALLASVANSYYN. At 145-152 the chain is on the periplasmic side; it reads RTMSGYYD. Residue Asp152 coordinates Mn(2+). Positions 152–154 match the DXD motif 2 motif; that stretch reads DTD. A helical membrane pass occupies residues 153–174; it reads TDMLVIVLPMFILFFMVRMILK. At 175 to 176 the chain is on the cytoplasmic side; sequence KD. A helical transmembrane segment spans residues 177–192; the sequence is FFSLIALPLFIGIYLW. Over 193–197 the chain is Periplasmic; that stretch reads WYPSS. 194-196 contacts [alpha-D-GalNAc-(1-&gt;4)]2-[beta-D-Glc-(1-&gt;3)]-[alpha-D-GalNAc-(1-&gt;4)]2-alpha-D-GalNAc-(1-&gt;3)-alpha-D-diNAcBac-tri-trans,hepta-cis-undecaprenyl diphosphate; that stretch reads YPS. A helical membrane pass occupies residues 198 to 215; sequence YTLNVALIGLFLIYTLIF. The Cytoplasmic segment spans residues 216–220; that stretch reads HRKEK. Residues 221–233 form a helical membrane-spanning segment; it reads IFYIAVILSSLTL. Residues 234–237 lie on the Periplasmic side of the membrane; it reads SNIA. The chain crosses the membrane as a helical span at residues 238–254; the sequence is WFYQSAIIVILFALFAL. Topologically, residues 255 to 260 are cytoplasmic; it reads EQKRLN. A helical transmembrane segment spans residues 261-278; sequence FMIIGILGSATLIFLILS. Topologically, residues 279 to 324 are periplasmic; it reads GGVDPILYQLKFYIFRSDESANLTQGFMYFNVNQTIQEVENVDFSE. Tyr291 is a binding site for [alpha-D-GalNAc-(1-&gt;4)]2-[beta-D-Glc-(1-&gt;3)]-[alpha-D-GalNAc-(1-&gt;4)]2-alpha-D-GalNAc-(1-&gt;3)-alpha-D-diNAcBac-tri-trans,hepta-cis-undecaprenyl diphosphate. A TIXE motif motif is present at residues 313–316; sequence TIQE. Glu316 serves as a coordination point for Mn(2+). Residues 325 to 347 traverse the membrane as a helical segment; the sequence is FMRRISGSEIVFLFSLFGFVWLL. Residues 348–352 lie on the Cytoplasmic side of the membrane; that stretch reads RKHKS. A helical transmembrane segment spans residues 353–369; that stretch reads MIMALPILVLGFLALKG. Over 370-373 the chain is Periplasmic; it reads GLRF. Arg372 lines the [alpha-D-GalNAc-(1-&gt;4)]2-[beta-D-Glc-(1-&gt;3)]-[alpha-D-GalNAc-(1-&gt;4)]2-alpha-D-GalNAc-(1-&gt;3)-alpha-D-diNAcBac-tri-trans,hepta-cis-undecaprenyl diphosphate pocket. Residues 374 to 396 form a helical membrane-spanning segment; that stretch reads TIYSVPVMALGFGFLLSEFKAIL. The Cytoplasmic portion of the chain corresponds to 397 to 406; that stretch reads VKKYSQLTSN. The chain crosses the membrane as a helical span at residues 407 to 427; it reads VCIVFATILTLAPVFIHIYNY. Residues 428 to 713 lie on the Periplasmic side of the membrane; it reads KAPTVFSQNE…RDAKVFKLKI (286 aa). Positions 457 to 459 are interacts with target acceptor peptide in protein substrate; that stretch reads WWD. Positions 457–461 match the WWDYG motif motif; it reads WWDYG. A [alpha-D-GalNAc-(1-&gt;4)]2-[beta-D-Glc-(1-&gt;3)]-[alpha-D-GalNAc-(1-&gt;4)]2-alpha-D-GalNAc-(1-&gt;3)-alpha-D-diNAcBac-tri-trans,hepta-cis-undecaprenyl diphosphate-binding site is contributed by Tyr462. N-linked (DATDGlc) asparagine glycosylation is present at Asn534. An MI motif motif is present at residues 568 to 575; the sequence is MSLIFSTV.

The protein belongs to the STT3 family. Requires Mg(2+) as cofactor. It depends on Mn(2+) as a cofactor.

It localises to the cell inner membrane. The enzyme catalyses tritrans,heptacis-undecaprenyl diphosphooligosaccharide + [protein]-L-asparagine = tritrans,heptacis-undecaprenyl diphosphate + a glycoprotein with the oligosaccharide chain attached by N-beta-D-glycosyl linkage to protein L-asparagine.. The protein operates within protein modification; protein glycosylation. Its function is as follows. Oligosaccharyl transferase (OST) that catalyzes the initial transfer of a defined glycan (GalNAc(2)GlcGalNAc(3)Bac(NAc)(2) in eubacteria, where Bac(NAc)(2) is di-N-acetyl bacillosamine) from the lipid carrier undecaprenol-pyrophosphate to an asparagine residue within an Asp/Glu-Asn-X-Ser/Thr consensus motif in nascent polypeptide chains, the first step in protein N-glycosylation. This Campylobacter jejuni subsp. jejuni serotype O:2 (strain ATCC 700819 / NCTC 11168) protein is Undecaprenyl-diphosphooligosaccharide--protein glycotransferase (pglB).